We begin with the raw amino-acid sequence, 601 residues long: MPNSLAGGQVPNPTLDAFDLVDRSLRNAGISGSIPGLEEGGTDPWTFSPLKNADQLKEVGMASRLRRVVSSFLKACGLLGSLYFFICSLDILSSAFQLLGSKMAGDIFKDNVVLSNPVAGLVIGVLVTVLVQSSSTSSSIVVSMVASKLLTVQVSVPIIMGVNVGTSITSTLVSMAQSGDRDEFQRAFSGSAVHGIFNWLTVLVLLPLESATAALERLSELALGAASLQPGQQAPDILKALTRPFTHLIIQLDSSVITSGITSNTTNSSLIKHWCGFRGETPQGSSEGCGLFSSCTERNSSASPEEDRLLCHHLFAGSKLTDLAVGFILLAGSLLVLCVCLVLIVKLLNSVLKGRIAQAVKTVINADFPFPFGWLSGYLAILVGAGLTFLLQSSSVFTAAIVPLMGVGVIDLERAYPLFLGSNIGTTTTALLAALASPADMLIFAVQVALIHFFFNLAGILLWYLVPVLRLPIPLAKRFGNLTAQYRWVAIVYLLLTFLLLPLAAFGLSLAGGTVLAAVGGPLVGLVLLIILVNVLQQHRPSWLPRCLQSWAWLPLWLHSLEPWDRLVTACCPCRACSNSPMTSKVAHCYENPQVIASQQL.

Over 1–75 (MPNSLAGGQV…RRVVSSFLKA (75 aa)) the chain is Cytoplasmic. S4 carries the post-translational modification Phosphoserine. Residues 76–96 (CGLLGSLYFFICSLDILSSAF) traverse the membrane as a helical segment. Topologically, residues 97 to 110 (QLLGSKMAGDIFKD) are extracellular. Residues 111–131 (NVVLSNPVAGLVIGVLVTVLV) traverse the membrane as a helical segment. Over 132–187 (QSSSTSSSIVVSMVASKLLTVQVSVPIIMGVNVGTSITSTLVSMAQSGDRDEFQRA) the chain is Cytoplasmic. The helical transmembrane segment at 188-208 (FSGSAVHGIFNWLTVLVLLPL) threads the bilayer. The Extracellular portion of the chain corresponds to 209–324 (ESATAALERL…FAGSKLTDLA (116 aa)). Residues N264, N267, and N299 are each glycosylated (N-linked (GlcNAc...) asparagine). Cysteines 275 and 311 form a disulfide. A helical membrane pass occupies residues 325–345 (VGFILLAGSLLVLCVCLVLIV). The Cytoplasmic segment spans residues 346–369 (KLLNSVLKGRIAQAVKTVINADFP). A helical transmembrane segment spans residues 370 to 390 (FPFGWLSGYLAILVGAGLTFL). Residues 391 to 441 (LQSSSVFTAAIVPLMGVGVIDLERAYPLFLGSNIGTTTTALLAALASPADM) lie on the Extracellular side of the membrane. A helical membrane pass occupies residues 442 to 462 (LIFAVQVALIHFFFNLAGILL). Residues 463-487 (WYLVPVLRLPIPLAKRFGNLTAQYR) lie on the Cytoplasmic side of the membrane. The helical transmembrane segment at 488–508 (WVAIVYLLLTFLLLPLAAFGL) threads the bilayer. At 509–512 (SLAG) the chain is on the extracellular side. The helical transmembrane segment at 513–533 (GTVLAAVGGPLVGLVLLIILV) threads the bilayer. The Cytoplasmic portion of the chain corresponds to 534 to 601 (NVLQQHRPSW…NPQVIASQQL (68 aa)).

The protein belongs to the SLC34A transporter family. In terms of tissue distribution, expressed only in the kidney.

The protein localises to the apical cell membrane. The catalysed reaction is 2 Na(+)(out) + phosphate(out) = 2 Na(+)(in) + phosphate(in). Involved in actively transporting phosphate into cells via Na(+) cotransport in the renal brush border membrane. The cotransport has a Na(+):Pi stoichiometry of 2:1 and is electroneutral. The sequence is that of Sodium-dependent phosphate transport protein 2C (Slc34a3) from Mus musculus (Mouse).